A 388-amino-acid polypeptide reads, in one-letter code: Galactokinase (388 aa).

33-36 (EHTD) provides a ligand contact to substrate. Residues Ser67 and 124-130 (GSGLSSS) contribute to the ATP site. Mg(2+)-binding residues include Ser130 and Glu162. The active-site Proton acceptor is the Asp174. Tyr224 contributes to the substrate binding site.

This sequence belongs to the GHMP kinase family. GalK subfamily.

Its subcellular location is the cytoplasm. The enzyme catalyses alpha-D-galactose + ATP = alpha-D-galactose 1-phosphate + ADP + H(+). It participates in carbohydrate metabolism; galactose metabolism. Functionally, catalyzes the transfer of the gamma-phosphate of ATP to D-galactose to form alpha-D-galactose-1-phosphate (Gal-1-P). This chain is Galactokinase, found in Streptococcus thermophilus (strain ATCC BAA-491 / LMD-9).